The chain runs to 271 residues: OX-2 membrane glycoprotein homolog (271 aa).

The signal sequence occupies residues 1–24 (MSSLFISLPWVAFIWLALLGAVGG). The Extracellular segment spans residues 25–227 (ARVQGPMRGS…QGPLAHDLPA (203 aa)). The 104-residue stretch at 26 to 129 (RVQGPMRGSA…SCTACLEVTS (104 aa)) folds into the Ig-like V-type domain. A disulfide bridge links Cys-39 with Cys-109. Asn-83, Asn-91, Asn-138, Asn-157, Asn-166, and Asn-208 each carry an N-linked (GlcNAc...) asparagine; by host glycan. Residues 130–220 (PPTGHVQVNS…ISIPASIQGP (91 aa)) enclose the Ig-like C2-type domain. Cysteines 148 and 202 form a disulfide. The helical transmembrane segment at 228-248 (AQGTLAGVAITLVGLFGIFAL) threads the bilayer. The Cytoplasmic portion of the chain corresponds to 249–271 (HHCRRKQGGASPTSDDMDPLSTQ).

As to quaternary structure, interacts with human CD200R1. N-glycosylated.

The protein localises to the host cell membrane. Its function is as follows. Dramatically stimulates primary monocytes, macrophages, and dendritic cells to produce the inflammatory cytokines interleukin 1-beta, IL-6, monocyte chemoattractant protein 1, and TNF-alpha. The induction of inflammatory cytokine production potentially promotes the cytokine-mediated angiogenic proliferation of KSHV-infected cells. The polypeptide is OX-2 membrane glycoprotein homolog (K14) (Human herpesvirus 8 type P (isolate GK18) (HHV-8)).